Reading from the N-terminus, the 279-residue chain is Rhamnulose-1-phosphate aldolase (279 aa).

The active site involves Glu-115. Zn(2+) is bound by residues His-138, His-140, and His-209.

The protein belongs to the aldolase class II family. RhaD subfamily. Zn(2+) is required as a cofactor.

It localises to the cytoplasm. It catalyses the reaction L-rhamnulose 1-phosphate = (S)-lactaldehyde + dihydroxyacetone phosphate. It participates in carbohydrate degradation; L-rhamnose degradation; glycerone phosphate from L-rhamnose: step 3/3. Its function is as follows. Catalyzes the reversible cleavage of L-rhamnulose-1-phosphate to dihydroxyacetone phosphate (DHAP) and L-lactaldehyde. This Enterococcus faecalis (strain ATCC 700802 / V583) protein is Rhamnulose-1-phosphate aldolase.